The primary structure comprises 209 residues: Putative 3-methyladenine DNA glycosylase (209 aa).

Belongs to the DNA glycosylase MPG family.

The polypeptide is Putative 3-methyladenine DNA glycosylase (Lactiplantibacillus plantarum (strain ATCC BAA-793 / NCIMB 8826 / WCFS1) (Lactobacillus plantarum)).